The chain runs to 118 residues: uncharacterized protein (118 aa).

The cysteines at positions 11 and 14 are disulfide-linked.

The protein belongs to the ArsC family.

This is an uncharacterized protein from Bacillus subtilis (strain 168).